Here is a 121-residue protein sequence, read N- to C-terminus: Small ribosomal subunit protein bS16 (121 aa).

The disordered stretch occupies residues 80–121; that stretch reads AGVREKTERNNPNKAKPGKKAQERAEEKAAKAAEAAEAADAE. 2 stretches are compositionally biased toward basic and acidic residues: residues 81-90 and 99-110; these read GVREKTERNN and KAQERAEEKAAK.

This sequence belongs to the bacterial ribosomal protein bS16 family.

The polypeptide is Small ribosomal subunit protein bS16 (Ruegeria sp. (strain TM1040) (Silicibacter sp.)).